Consider the following 1119-residue polypeptide: Transient receptor potential cation channel subfamily A member 1 (1119 aa).

At 1-718 (MKRSLRKMWR…MKWLAYGFRA (718 aa)) the chain is on the cytoplasmic side. ANK repeat units follow at residues 62 to 92 (MDTF…EVLH), 97 to 126 (YGNT…NPNL), 130 to 160 (NMMA…DVNL), 164 to 193 (NGNT…KPCK), 197 to 226 (WGCF…EHGY), 238 to 267 (GKAT…QIDP), 271 to 301 (GRCT…SVDI), 308 to 337 (CHET…DINK), 341 to 370 (EGRS…QVDI), 374 to 403 (FGRN…QQIK), 412 to 441 (DGCT…SIHS), 445 to 474 (DKKS…DTRL), 481 to 510 (HGMT…LFLS), 513 to 542 (NGWT…KCTD), 547 to 576 (DGNT…DIVL), and 579 to 609 (QQAS…DECL). Disulfide bonds link C192-C665, C462-C665, C608-C621, C621-C665, and C633-C856. At P394 the chain carries 4-hydroxyproline; by EGLN1; transient; in normoxia and hyperoxia. Residues C414 and C421 each coordinate (E)-cinnamaldehyde. C621 provides a ligand contact to (E)-cinnamaldehyde. Residue C633 is modified to Cysteine sulfenic acid (-SOH); transient; in hyperoxia. (E)-cinnamaldehyde-binding residues include C641, C665, and K710. A helical membrane pass occupies residues 719–739 (HMMNLGSYCLGLIPMTILVVN). The Extracellular segment spans residues 740-767 (IKPGMAFNSTGIINETSDHSEILDTTNS). N-linked (GlcNAc...) asparagine glycosylation is found at N747 and N753. Residues 768 to 793 (YLIKTCMILVFLSSIFGYCKEAGQIF) form a helical membrane-spanning segment. Ca(2+) is bound by residues E788 and Q791. Topologically, residues 794–798 (QQKRN) are cytoplasmic. Residues 799 to 823 (YFMDISNVLEWIIYTTGIIFVLPLF) traverse the membrane as a helical segment. Ca(2+) contacts are provided by N805 and E808. Topologically, residues 824-829 (VEIPAH) are extracellular. The chain crosses the membrane as a helical span at residues 830 to 850 (LQWQCGAIAVYFYWMNFLLYL). The Cytoplasmic portion of the chain corresponds to 851-862 (QRFENCGIFIVM). C856 is subject to Cysteine sulfenic acid (-SOH); transient; in hyperoxia. Residues 863–892 (LEVILKTLLRSTVVFIFLLLAFGLSFYILL) traverse the membrane as a helical segment. Residues 893-901 (NLQDPFSSP) are Extracellular-facing. The segment at residues 902–922 (LLSIIQTFSMMLGDINYRESF) is an intramembrane region (pore-forming). Residues 923–933 (LEPYLRNELAH) are Extracellular-facing. The helical transmembrane segment at 934–960 (PVLSFAQLVSFTIFVPIVLMNLLIGLA) threads the bilayer. Residues 961 to 1119 (VGDIAEVQKH…VKAKTHHLEP (159 aa)) are Cytoplasmic-facing. Residues 1042-1071 (MEILKQKYRLKDLTFLLEKQHELIKLIIQK) adopt a coiled-coil conformation. Residue 1046 to 1052 (KQKYRLK) participates in a 1,2-diacyl-sn-glycero-3-phospho-(1D-myo-inositol) binding.

Belongs to the transient receptor (TC 1.A.4) family. As to quaternary structure, homotetramer. Interacts with TMEM100. Interacts with EGLN1. Interacts with the scorpion wasabi receptor toxin at the same site that electrophiles but in a non-covalent manner. Post-translationally, TRPA1 activation by electrophiles occurs though covalent modification of specific cysteine residues in the N-terminal cytoplasmic domain. In terms of processing, hydroxylation is required for TRPA1 activity inhibition in normoxia. In hypoxia, the decrease in oxygen concentration diminishes the activity of the hydroxylase EGLN1, thus relieving TRPA1 from inhibition and ultimately leading to channel activation. Oxidation of Cys-633 and Cys-856 in hyperoxia may override the hydroxylase EGLN1-mediated inhibition, causing TRPA1 activation.

It is found in the cell membrane. It carries out the reaction Ca(2+)(in) = Ca(2+)(out). The catalysed reaction is Mg(2+)(in) = Mg(2+)(out). It catalyses the reaction Na(+)(in) = Na(+)(out). The enzyme catalyses K(+)(in) = K(+)(out). It carries out the reaction Zn(2+)(in) = Zn(2+)(out). Electrophilic ligands activate the channel by covalent modification of intracellular cysteines; Cys-621 plays a key role in covalent binding of electrophiles. Extracellular Ca(2+) both potentiates and inactivates TRPA1; a rapid potentiation follows by slow desensitization. Activated by increase in intracellular Ca(2+) concentration. Inhibited by the potent blocker of TRPV channels ruthenium red, A-967079, AP-18, HC-030031, and aryl sulfonamide derivative (S)-N-(4-chlorobenzyl)-1-((4-fluorophenyl)sulfonyl)pyrrolidine-2-carboxamide (ASD). Activated by benzyl isothiocyanate (BITC), iodoacetamide, sulfhydryl reactive agent MTSEA, N-methyl maleimide (NMM), N-ethylmaleimide (NEM), and 2-aminoethyldiphenylborinate (2-APB). Also activated by hyperoxia. Acivated by intracellular Zn(2+). TRPA1 activation may critically depend on the presence of small intracellular compounds such as polyphosphates. Its function is as follows. Ligand-activated Ca(2+)-permeable, nonselective cation channel involved in pain detection and possibly also in cold perception, oxygen concentration perception, cough, itch, and inner ear function. Has a relatively high Ca(2+) selectivity, with a preference for divalent over monovalent cations (Ca(2+) &gt; Ba(2+) &gt; Mg(2+) &gt; NH4(+) &gt; Li(+) &gt; K(+)), the influx of cation into the cytoplasm leads to membrane depolarization. Has a central role in the pain response to endogenous inflammatory mediators, such as bradykinin and to a diverse array of irritants. Activated by a large variety of structurally unrelated electrophilic and non-electrophilic chemical compounds, such as allylthiocyanate (AITC) from mustard oil or wasabi, cinnamaldehyde, diallyl disulfide (DADS) from garlic, and acrolein, an environmental irritant. Electrophilic ligands activate TRPA1 by interacting with critical N-terminal Cys residues in a covalent manner. Non-electrophile agonists bind at distinct sites in the transmembrane domain to promote channel activation. Also acts as an ionotropic cannabinoid receptor by being activated by delta(9)-tetrahydrocannabinol (THC), the psychoactive component of marijuana. May be a component for the mechanosensitive transduction channel of hair cells in inner ear, thereby participating in the perception of sounds. This Homo sapiens (Human) protein is Transient receptor potential cation channel subfamily A member 1.